We begin with the raw amino-acid sequence, 248 residues long: Mannosylfructose-phosphate phosphatase (248 aa).

This sequence belongs to the sucrose phosphatase family.

It catalyses the reaction beta-D-fructofuranosyl alpha-D-mannopyranoside 6(F)-phosphate + H2O = beta-D-fructofuranosyl alpha-D-mannopyranoside + phosphate. It functions in the pathway carbohydrate metabolism; mannosylfructose biosynthesis; beta-D-fructofuranosyl alpha-D-mannopyranoside from D-fructose 6-phosphate and GDP-alpha-D-mannose: step 2/2. Inhibited by the phosphatase inhibitors fluoride, molybdate and orthovanadate. This Agrobacterium fabrum (strain C58 / ATCC 33970) (Agrobacterium tumefaciens (strain C58)) protein is Mannosylfructose-phosphate phosphatase.